Here is a 301-residue protein sequence, read N- to C-terminus: 33 kDa chaperonin (301 aa).

2 disulfide bridges follow: Cys-244–Cys-246 and Cys-277–Cys-280.

This sequence belongs to the HSP33 family. In terms of processing, under oxidizing conditions two disulfide bonds are formed involving the reactive cysteines. Under reducing conditions zinc is bound to the reactive cysteines and the protein is inactive.

The protein resides in the cytoplasm. Redox regulated molecular chaperone. Protects both thermally unfolding and oxidatively damaged proteins from irreversible aggregation. Plays an important role in the bacterial defense system toward oxidative stress. The chain is 33 kDa chaperonin from Geobacter sulfurreducens (strain ATCC 51573 / DSM 12127 / PCA).